A 534-amino-acid polypeptide reads, in one-letter code: Calcium-dependent protein kinase 18 (534 aa).

A disordered region spans residues methionine 1–histidine 49. Glycine 2 carries the N-myristoyl glycine lipid modification. The segment covering glycine 14–lysine 29 has biased composition (polar residues). Residues asparagine 36 to leucine 47 are compositionally biased toward basic residues. A Protein kinase domain is found at tyrosine 71–valine 331. Residues leucine 77 to threonine 85 and lysine 100 contribute to the ATP site. Residue aspartate 197 is the Proton acceptor of the active site. Phosphoserine is present on serine 237. The tract at residues alanine 337 to leucine 367 is autoinhibitory domain. 4 EF-hand domains span residues aspartate 374–tryptophan 409, leucine 411–leucine 446, lysine 453–isoleucine 488, and leucine 491–lysine 518. Ca(2+)-binding residues include aspartate 387, aspartate 389, asparagine 391, serine 393, glutamate 398, aspartate 424, asparagine 426, aspartate 428, glutamate 435, aspartate 466, aspartate 468, aspartate 470, glutamate 477, aspartate 496, aspartate 498, aspartate 500, and arginine 502. Serine 504 bears the Phosphoserine mark. Residue glutamate 507 coordinates Ca(2+).

It belongs to the protein kinase superfamily. Ser/Thr protein kinase family. CDPK subfamily.

The protein resides in the membrane. The enzyme catalyses L-seryl-[protein] + ATP = O-phospho-L-seryl-[protein] + ADP + H(+). It catalyses the reaction L-threonyl-[protein] + ATP = O-phospho-L-threonyl-[protein] + ADP + H(+). Activated by calcium. Autophosphorylation may play an important role in the regulation of the kinase activity. Its function is as follows. May play a role in signal transduction pathways that involve calcium as a second messenger. The sequence is that of Calcium-dependent protein kinase 18 (CPK18) from Arabidopsis thaliana (Mouse-ear cress).